The primary structure comprises 2300 residues: Adenylate cyclase (2300 aa).

2 stretches are compositionally biased toward polar residues: residues 1-21 and 28-41; these read MTRNDGGSRYSSIDSAQSSIT and TPTSSLGSSMTRPL. Disordered stretches follow at residues 1–256, 272–593, and 631–652; these read MTRN…GSFL, GIRP…DLTR, and TKLFTSKKSSSAKQPQDDMDED. Low complexity-rich tracts occupy residues 42–61 and 92–152; these read SPSLQAGSSSSNGGHNVSRS and SSQS…QVSP. Polar residues predominate over residues 153 to 169; the sequence is TGGSRLTQSPTTPSNAS. The segment covering 170–185 has biased composition (basic and acidic residues); it reads IREHRMSELGGYRREM. Over residues 204–221 the composition is skewed to low complexity; the sequence is QQQPQQPQQQQQQQQQQQ. Polar residues predominate over residues 228–237; sequence VSGTFSNLSQ. The segment covering 303-313 has biased composition (low complexity); sequence SIASITTTASS. Over residues 333–344 the composition is skewed to basic and acidic residues; the sequence is GDRDDWPGRDSS. The span at 345 to 357 shows a compositional bias: polar residues; sequence EISLPQPSHSGPM. Residues 410–421 are compositionally biased toward pro residues; it reads PSRPRTPVPAPE. Positions 455 to 469 are enriched in polar residues; sequence DSSQNPPKTSSSARS. Over residues 484–501 the composition is skewed to basic and acidic residues; that stretch reads KSNEDPRALKPSLSREDS. Polar residues predominate over residues 511 to 550; it reads NGSSSMMGTRSRAQSPAPSWTGTSRGLKANSISDGTSSPA. Over residues 552–565 the composition is skewed to basic residues; the sequence is SHKKGILGRFRRHN. Positions 631 to 643 are enriched in low complexity; the sequence is TKLFTSKKSSSAK. Positions 749-841 constitute a Ras-associating domain; it reads SNYYIRVFRS…IDEIGREDNS (93 aa). 16 LRR repeats span residues 867–890, 892–914, 915–938, 939–961, 962–986, 988–1008, 1009–1031, 1033–1055, 1056–1079, 1081–1097, 1098–1119, 1120–1142, 1143–1165, 1166–1188, 1189–1211, and 1213–1234; these read NQKLNHVDLSGRNLITIPVPLYRK, AEIVSLNLSRNLSLDVPRDFIQA, CTALRDIKYNNNEAQALPKSFATA, SKLTYLDVSNNRLQDLDHSELSK, LTGLLKLNLANNCLRSLPPTLGAYK, LRTLNISSNFLDVFPSFICEL, ETIVDLDLSFNSINNLPDNLMKL, NLEKFVITNNRLSGPISESVRDL, VSLRELDIRYNQISTIDVLSDLPR, EILSADHNQISKFSGSF, ERLRSLKLNSNPIVKFEVKAPV, PTLKILNLSNAQLASIDESIDNL, MNLERLILDSNYFVSLPNQIGNL, KKLDHLSMANNHLGELPPEIGCL, TELRTLDVHGNNMRKLPNEIWWA, and KLEHLNASSNILTEFPKPASRA. Residues 1228 to 1336 form a disordered region; sequence PKPASRAPQA…VITPSNGPRK (109 aa). Residues 1253–1263 show a composition bias toward polar residues; that stretch reads ANKNGLLSRTP. The span at 1313–1327 shows a compositional bias: low complexity; sequence TSVVSRSTTQSSTGV. LRR repeat units lie at residues 1349–1369, 1373–1396, 1398–1420, 1422–1445, 1447–1469, and 1474–1497; these read SGSLKNLYLADNQLDDDVFEE, LPELRVLNLSCNDLSDMPQGTIRS, PQLVELYLSGNELTSLPAEDFLE, HCLLQTLHINGNKFINLPAEISRA, KLQVLDCSSNNLKYNVTNVPYDW, and NRDLRYLNLSGNKRLEIKNNYRQP. Residues 1552 to 1828 form the PPM-type phosphatase domain; sequence PYGMADTLGK…NKLLIMMIGV (277 aa). The interval 1847 to 1867 is disordered; that stretch reads FSMPQDDPSHVPPSGNKRRKV. The Guanylate cyclase domain maps to 1892-2029; it reads SIVFTDIKNS…PMVNKASRIS (138 aa). 2 residues coordinate Mg(2+): Asp1897 and Asp1940. The disordered stretch occupies residues 2272–2300; sequence LDQAETDDATDNNSSGDVDTLDGSDTEQE. A compositionally biased stretch (acidic residues) spans 2290-2300; sequence DTLDGSDTEQE.

It belongs to the adenylyl cyclase class-4/guanylyl cyclase family. Requires Mg(2+) as cofactor.

It catalyses the reaction ATP = 3',5'-cyclic AMP + diphosphate. Functionally, plays essential roles in regulation of cellular metabolism by catalyzing the synthesis of a second messenger, cAMP. The sequence is that of Adenylate cyclase (cr-1) from Neurospora crassa (strain ATCC 24698 / 74-OR23-1A / CBS 708.71 / DSM 1257 / FGSC 987).